The following is a 189-amino-acid chain: Protein GrpE (189 aa).

Residues 1–24 (MADEQNLDTQNPEAQAAENAAPSD) are disordered. The segment covering 10–24 (QNPEAQAAENAAPSD) has biased composition (low complexity).

It belongs to the GrpE family. In terms of assembly, homodimer.

It localises to the cytoplasm. Functionally, participates actively in the response to hyperosmotic and heat shock by preventing the aggregation of stress-denatured proteins, in association with DnaK and GrpE. It is the nucleotide exchange factor for DnaK and may function as a thermosensor. Unfolded proteins bind initially to DnaJ; upon interaction with the DnaJ-bound protein, DnaK hydrolyzes its bound ATP, resulting in the formation of a stable complex. GrpE releases ADP from DnaK; ATP binding to DnaK triggers the release of the substrate protein, thus completing the reaction cycle. Several rounds of ATP-dependent interactions between DnaJ, DnaK and GrpE are required for fully efficient folding. The sequence is that of Protein GrpE from Ectopseudomonas mendocina (strain ymp) (Pseudomonas mendocina).